The primary structure comprises 510 residues: Maturase K (510 aa).

This sequence belongs to the intron maturase 2 family. MatK subfamily.

It localises to the plastid. Its subcellular location is the chloroplast. Its function is as follows. Usually encoded in the trnK tRNA gene intron. Probably assists in splicing its own and other chloroplast group II introns. This chain is Maturase K, found in Taxus cuspidata (Japanese yew).